The sequence spans 64 residues: Large ribosomal subunit protein bL35 (64 aa).

Residues 1-28 (MPKMKTKSGAAKRFKKTAGGLKHKHAFK) are compositionally biased toward basic residues. Residues 1–64 (MPKMKTKSGA…ARVERSLRLR (64 aa)) are disordered. Residues 53 to 64 (DVARVERSLRLR) show a composition bias toward basic and acidic residues.

This sequence belongs to the bacterial ribosomal protein bL35 family.

The protein is Large ribosomal subunit protein bL35 of Pseudomonas aeruginosa (strain LESB58).